The primary structure comprises 348 residues: DnaJ homolog subfamily B member 5 (348 aa).

Residues 4–68 (DYYKILGIPS…KKRSLYDQYG (65 aa)) enclose the J domain.

In Mus musculus (Mouse), this protein is DnaJ homolog subfamily B member 5 (Dnajb5).